The sequence spans 466 residues: Gamma-aminobutyric acid receptor subunit gamma-2 (466 aa).

Positions 1–38 (MSSPNTWSTGSTVYSPVFSQKMTLWILLLLSLYPGFTS) are cleaved as a signal peptide. Topologically, residues 39–274 (QKSDDDYEDY…FDLSRRMGYF (236 aa)) are extracellular. N51 and N128 each carry an N-linked (GlcNAc...) asparagine glycan. A disulfide bridge links C189 with C203. A glycan (N-linked (GlcNAc...) asparagine) is linked at N246. A helical transmembrane segment spans residues 275–295 (TIQTYIPCTLIVVLSWVSFWI). The Cytoplasmic portion of the chain corresponds to 296-301 (NKDAVP). Residues 302–321 (ARTSLGITTVLTMTTLSTIA) traverse the membrane as a helical segment. At 322–333 (RKSLPKVSYVTA) the chain is on the extracellular side. Residues 334–358 (MDLFVSVCFIFVFSALVEYGTLHYF) traverse the membrane as a helical segment. Residues 359-442 (VSNRKPSKDK…IHIRIAKMDS (84 aa)) are Cytoplasmic-facing. Residues 443–463 (YARIFFPTAFCLFNLVYWVSY) traverse the membrane as a helical segment. Topologically, residues 464–466 (LYL) are extracellular.

The protein belongs to the ligand-gated ion channel (TC 1.A.9) family. Gamma-aminobutyric acid receptor (TC 1.A.9.5) subfamily. GABRG2 sub-subfamily. In terms of assembly, heteropentamer, formed by a combination of alpha (GABRA1-6), beta (GABRB1-3), gamma (GABRG1-3), delta (GABRD), epsilon (GABRE), rho (GABRR1-3), pi (GABRP) and theta (GABRQ) chains, each subunit exhibiting distinct physiological and pharmacological properties. Interacts with GABARAP. Interacts with KIF21B. Identified in a complex of 720 kDa composed of LHFPL4, NLGN2, GABRA1, GABRB2, GABRG2 and GABRB3. Interacts with LHFPL4. Interacts with SHISA7; interaction leads to the regulation of GABA(A) receptor trafficking, channel deactivation kinetics and pharmacology. Palmitoylated by ZDHHC3/GODZ; required for the accumulation of GABA(A) receptors at the postsynaptic membrane of inhibitory GABAergic synapses. Post-translationally, glycosylated. As to expression, expressed in brain (at protein level). Expressed in lungs, in alveolar epithelium.

The protein localises to the postsynaptic cell membrane. The protein resides in the cell membrane. It localises to the cell projection. Its subcellular location is the dendrite. It is found in the cytoplasmic vesicle membrane. The enzyme catalyses chloride(in) = chloride(out). Allosterically activated by benzodiazepines. Activated by pentobarbital. Inhibited by the antagonist bicuculline. Inhibited by zinc ions. Potentiated by histamine. Functionally, gamma subunit of the heteropentameric ligand-gated chloride channel gated by gamma-aminobutyric acid (GABA), a major inhibitory neurotransmitter in the brain. GABA-gated chloride channels, also named GABA(A) receptors (GABAAR), consist of five subunits arranged around a central pore and contain GABA active binding site(s) located at the alpha and beta subunit interface(s). When activated by GABA, GABAARs selectively allow the flow of chloride anions across the cell membrane down their electrochemical gradient. Gamma-2/GABRG2-containing GABAARs are found at both synaptic and extrasynaptic sites. Chloride influx into the postsynaptic neuron following GABAAR opening decreases the neuron ability to generate a new action potential, thereby reducing nerve transmission. GABAARs containing alpha-1 and beta-2 or -3 subunits exhibit synaptogenic activity; the gamma-2 subunit being necessary but not sufficient to induce rapid synaptic contacts formation. Extrasynaptic gamma-2-containing receptors contribute to the tonic GABAergic inhibition. GABAARs function also as histamine receptor where histamine binds at the interface of two neighboring beta subunits and potentiates GABA response in a gamma-2 subunit-controlled manner. In Rattus norvegicus (Rat), this protein is Gamma-aminobutyric acid receptor subunit gamma-2.